The chain runs to 214 residues: Glutathione S-transferase 1 (214 aa).

The GST N-terminal domain maps to 2 to 83; sequence APMKLYGAVM…YAARKNKPEL (82 aa). Residues S12, 41–42, 54–55, and 67–68 each bind glutathione; these read HK, QV, and ES. Residues 88–214 enclose the GST C-terminal domain; it reads NLEEAAMVDV…KVAALMKPSA (127 aa).

This sequence belongs to the GST superfamily. Phi family. As to quaternary structure, homodimer or heterodimer of GST-I and GST-IV (=GST-II). As to expression, expressed in the stem and leaves, lower levels are seen in the pollen and endosperm.

The enzyme catalyses RX + glutathione = an S-substituted glutathione + a halide anion + H(+). In terms of biological role, conjugation of reduced glutathione to a wide number of exogenous and endogenous hydrophobic electrophiles. Involved in the detoxification of certain herbicides. This Zea mays (Maize) protein is Glutathione S-transferase 1 (GST1).